The following is a 117-amino-acid chain: Probable non-functional T cell receptor gamma variable (117 aa).

The signal sequence occupies residues 1 to 20; that stretch reads MRWALAVLLAFLSPASQISS. Positions 21–117 constitute an Ig-like domain; that stretch reads NLEGRTKSVT…GFYYCATWDR (97 aa). C41 and C112 are oxidised to a cystine. N105 carries N-linked (GlcNAc...) asparagine glycosylation.

Gamma-delta TR is a heterodimer composed of a gamma and delta chain; disulfide-linked. The gamma-delta TR is associated with the transmembrane signaling CD3 coreceptor proteins following the stoichiometry: a single gamma-delta TR heterodimer associates with one CD3D-CD3E heterodimer, one CD3G-CD3E heterodimer and one CD247 homodimer forming a stable octameric structure. Upon activation, gamma-delta TR complex associates with FCER1G to initiate intracellular signaling.

It localises to the cell membrane. Functionally, probable non-functional open reading frame (ORF) of V region of the variable domain of T cell receptor (TR) gamma chain. Non-functional ORF generally cannot participate in the synthesis of a productive T cell receptor (TR) chain due to altered V-(D)-J or switch recombination and/or splicing site (at mRNA level) and/or conserved amino acid change (protein level). Gamma-delta TRs recognize a variety of self and foreign non-peptide antigens frequently expressed at the epithelial boundaries between the host and external environment, including endogenous lipids presented by MH-like protein CD1D and phosphoantigens presented by butyrophilin-like molecule BTN3A1. Upon antigen recognition induces rapid, innate-like immune responses involved in pathogen clearance and tissue repair. Binding of gamma-delta TR complex to antigen triggers phosphorylation of immunoreceptor tyrosine-based activation motifs (ITAMs) in the CD3 chains by the LCK and FYN kinases, allowing the recruitment, phosphorylation, and activation of ZAP70 that facilitates phosphorylation of the scaffolding proteins LCP2 and LAT. This lead to the formation of a supramolecular signalosome that recruits the phospholipase PLCG1, resulting in calcium mobilization and ERK activation, ultimately leading to T cell expansion and differentiation into effector cells. Gamma-delta TRs are produced through somatic rearrangement of a limited repertoire of variable (V), diversity (D), and joining (J) genes. The potential diversity of gamma-delta TRs is conferred by the unique ability to rearrange (D) genes in tandem and to utilize all three reading frames. The combinatorial diversity is considerably increased by the sequence exonuclease trimming and random nucleotide (N) region additions which occur during the V-(D)-J rearrangements. The protein is Probable non-functional T cell receptor gamma variable of Homo sapiens (Human).